The sequence spans 600 residues: Elongation factor 4 (600 aa).

In terms of domain architecture, tr-type G spans 5-187 (KYIRNFSIIA…AIINKLPAPK (183 aa)). GTP contacts are provided by residues 17–22 (DHGKST) and 134–137 (NKID).

The protein belongs to the TRAFAC class translation factor GTPase superfamily. Classic translation factor GTPase family. LepA subfamily.

It localises to the cell inner membrane. The catalysed reaction is GTP + H2O = GDP + phosphate + H(+). Functionally, required for accurate and efficient protein synthesis under certain stress conditions. May act as a fidelity factor of the translation reaction, by catalyzing a one-codon backward translocation of tRNAs on improperly translocated ribosomes. Back-translocation proceeds from a post-translocation (POST) complex to a pre-translocation (PRE) complex, thus giving elongation factor G a second chance to translocate the tRNAs correctly. Binds to ribosomes in a GTP-dependent manner. The sequence is that of Elongation factor 4 from Rickettsia prowazekii (strain Madrid E).